The following is a 423-amino-acid chain: SH2 domain-containing adapter protein F (423 aa).

3 disordered regions span residues 1 to 87 (MQQE…STTR), 110 to 208 (DPFD…WEWK), and 225 to 312 (DLPW…GEWT). The segment covering 192 to 203 (EDDERPPEEYDQ) has biased composition (acidic residues). Residue Tyr201 is modified to Phosphotyrosine. Positions 323–418 (WYHGAISRTD…AEHMSLLYPV (96 aa)) constitute an SH2 domain.

In terms of assembly, interacts with phosphorylated 'Tyr-720' of PDGFRA via its SH2 domain. Post-translationally, may become phosphorylated upon binding to PDGFRA. As to expression, expressed in skeletal muscle, brain, liver, prostate, testis, ovary, small intestine and colon.

Adapter protein which may play a role in the regulation of apoptosis in response to PDGF. In Homo sapiens (Human), this protein is SH2 domain-containing adapter protein F.